The sequence spans 204 residues: MIGRVTGILVEKQAPEILLDVQGVGYELLLPMTSFYNLPEVGQETTLFTHFVVREDAHLLFGFSHKQDRSLFRELIKTNGVGPKLALAILSAMSVNEFVYAIEQEELSKLVKIPGVGKKTAERLLVELKGKFKGLQQTDFFIKSSHLPGIKCSKLDQSLQLDEAVSALIALGYKPIEAEKMVKKVLKADLTSEQLIREALKAAL.

The domain I stretch occupies residues 1 to 64; it reads MIGRVTGILV…EDAHLLFGFS (64 aa). A domain II region spans residues 65-143; sequence HKQDRSLFRE…GLQQTDFFIK (79 aa). The interval 144 to 155 is flexible linker; sequence SSHLPGIKCSKL. Residues 156–204 are domain III; that stretch reads DQSLQLDEAVSALIALGYKPIEAEKMVKKVLKADLTSEQLIREALKAAL.

It belongs to the RuvA family. In terms of assembly, homotetramer. Forms an RuvA(8)-RuvB(12)-Holliday junction (HJ) complex. HJ DNA is sandwiched between 2 RuvA tetramers; dsDNA enters through RuvA and exits via RuvB. An RuvB hexamer assembles on each DNA strand where it exits the tetramer. Each RuvB hexamer is contacted by two RuvA subunits (via domain III) on 2 adjacent RuvB subunits; this complex drives branch migration. In the full resolvosome a probable DNA-RuvA(4)-RuvB(12)-RuvC(2) complex forms which resolves the HJ.

The protein localises to the cytoplasm. Its function is as follows. The RuvA-RuvB-RuvC complex processes Holliday junction (HJ) DNA during genetic recombination and DNA repair, while the RuvA-RuvB complex plays an important role in the rescue of blocked DNA replication forks via replication fork reversal (RFR). RuvA specifically binds to HJ cruciform DNA, conferring on it an open structure. The RuvB hexamer acts as an ATP-dependent pump, pulling dsDNA into and through the RuvAB complex. HJ branch migration allows RuvC to scan DNA until it finds its consensus sequence, where it cleaves and resolves the cruciform DNA. The chain is Holliday junction branch migration complex subunit RuvA from Histophilus somni (strain 2336) (Haemophilus somnus).